Reading from the N-terminus, the 442-residue chain is Probable carboxypeptidase PADG_04062 (442 aa).

A signal peptide spans 1 to 20 (MKLQYLVALLSVQAVPPVTA). A glycan (N-linked (GlcNAc...) asparagine) is linked at N102. Position 160 (D160) interacts with Zn(2+). Residue E192 is the Proton acceptor of the active site. E193 provides a ligand contact to Zn(2+). An N-linked (GlcNAc...) asparagine glycan is attached at N343.

Belongs to the peptidase M20A family. It depends on Zn(2+) as a cofactor.

Its subcellular location is the secreted. The sequence is that of Probable carboxypeptidase PADG_04062 from Paracoccidioides brasiliensis (strain Pb18).